The sequence spans 595 residues: Actin-histidine N-methyltransferase (595 aa).

The disordered stretch occupies residues 1 to 22 (MGKKSRVKTQKSGTGATATVSP). The segment covering 10 to 20 (QKSGTGATATV) has biased composition (polar residues). S-adenosyl-L-methionine is bound by residues Arg75, 104–106 (EGF), Arg254, 275–279 (DMCNH), and 325–327 (SGF). The SET domain occupies 94–314 (EGFEMVNFKE…AGEQIYIFYG (221 aa)). Ser513 is subject to Phosphoserine. Positions 552 to 595 (LVNGENCIPNGTRSENEDLNQEENKRAVEDAKGSSSDSTDAVKK) are disordered. Residues 573–583 (EENKRAVEDAK) show a composition bias toward basic and acidic residues. A compositionally biased stretch (polar residues) spans 584 to 595 (GSSSDSTDAVKK).

This sequence belongs to the class V-like SAM-binding methyltransferase superfamily. SETD3 actin-histidine methyltransferase family. In terms of assembly, interacts with MYOD1. In terms of processing, phosphorylated by GSK3B, which is required for recognition by the SCF(FBXW7) complex and subsequent degradation. Ubiquitinated by the SCF(FBXW7) complex following phosphorylation by GSK3B, leading to its degradation by the proteasome.

The protein localises to the cytoplasm. It is found in the nucleus. The catalysed reaction is L-histidyl-[protein] + S-adenosyl-L-methionine = N(tele)-methyl-L-histidyl-[protein] + S-adenosyl-L-homocysteine + H(+). Protein-histidine N-methyltransferase that specifically mediates 3-methylhistidine (tele-methylhistidine) methylation of actin at 'His-73'. Histidine methylation of actin is required for smooth muscle contraction of the laboring uterus during delivery. Does not have protein-lysine N-methyltransferase activity and probably only catalyzes histidine methylation of actin. This Otolemur garnettii (Small-eared galago) protein is Actin-histidine N-methyltransferase.